A 487-amino-acid polypeptide reads, in one-letter code: MTNEVRVRYAPSPTGYPHLGNIRTAMFNWLFARHNGGKFIVRIEDTDRERYVEGAVESILESLNWLGLDWDEGPDKGGDYGPYYQSERLPLYRKAAEKLVAEGKAYYCHCSSEKLDKMREDQIARKEPPGYDRCCRDMGLGQKEGAVIRFKIPLDGQTAFTDLIRGEVTFDNAKQDDFVILKSDGFPTYHLASVVDDHAMQISHVLRAEEWLPSTPKHLMLYKALGYTPPLYAHLPMILGPDRSKLSKRHGATSTIEYKQAGYLPETMVNFLSLLGWAYDDKTELFSREQLIEYFCLEKVSKTAAIFNYEKLDWMNGMYIRTLSAQDLACRAMPFLEKDVRIAASGHLNLDYTVKVMPLIQERAKKLNELAELCWFIYSDDISYDPALLIDKKLTKETSLSALKAANARLEALPNFDAASMEEHIRPLAAELELKPGQLFGMLRTASTGQQVAPPLFQTMEVLGRQRCLWRIAMAIARLSEMPFQRS.

The 'HIGH' region signature appears at 11–21 (PSPTGYPHLGN). The Zn(2+) site is built by Cys-108, Cys-110, Cys-135, and Asp-137. The 'KMSKS' region motif lies at 245–249 (KLSKR). ATP is bound at residue Lys-248.

The protein belongs to the class-I aminoacyl-tRNA synthetase family. Glutamate--tRNA ligase type 1 subfamily. In terms of assembly, monomer. Zn(2+) is required as a cofactor.

The protein resides in the cytoplasm. The enzyme catalyses tRNA(Glu) + L-glutamate + ATP = L-glutamyl-tRNA(Glu) + AMP + diphosphate. In terms of biological role, catalyzes the attachment of glutamate to tRNA(Glu) in a two-step reaction: glutamate is first activated by ATP to form Glu-AMP and then transferred to the acceptor end of tRNA(Glu). The protein is Glutamate--tRNA ligase of Dehalococcoides mccartyi (strain CBDB1).